We begin with the raw amino-acid sequence, 548 residues long: Chaperonin GroEL (548 aa).

Residues 30 to 33 (TLGP), lysine 51, 87 to 91 (DGTTT), glycine 415, 479 to 481 (NAA), and aspartate 495 each bind ATP.

The protein belongs to the chaperonin (HSP60) family. As to quaternary structure, forms a cylinder of 14 subunits composed of two heptameric rings stacked back-to-back. Interacts with the co-chaperonin GroES.

Its subcellular location is the cytoplasm. It catalyses the reaction ATP + H2O + a folded polypeptide = ADP + phosphate + an unfolded polypeptide.. Its function is as follows. Together with its co-chaperonin GroES, plays an essential role in assisting protein folding. The GroEL-GroES system forms a nano-cage that allows encapsulation of the non-native substrate proteins and provides a physical environment optimized to promote and accelerate protein folding. This chain is Chaperonin GroEL, found in Escherichia fergusonii (strain ATCC 35469 / DSM 13698 / CCUG 18766 / IAM 14443 / JCM 21226 / LMG 7866 / NBRC 102419 / NCTC 12128 / CDC 0568-73).